The sequence spans 301 residues: tRNA dimethylallyltransferase (301 aa).

ATP is bound at residue 8–15; it reads GPTAVGKT. 10 to 15 is a binding site for substrate; that stretch reads TAVGKT. The segment at 33-36 is interaction with substrate tRNA; it reads DSRQ.

This sequence belongs to the IPP transferase family. Monomer. The cofactor is Mg(2+).

It catalyses the reaction adenosine(37) in tRNA + dimethylallyl diphosphate = N(6)-dimethylallyladenosine(37) in tRNA + diphosphate. In terms of biological role, catalyzes the transfer of a dimethylallyl group onto the adenine at position 37 in tRNAs that read codons beginning with uridine, leading to the formation of N6-(dimethylallyl)adenosine (i(6)A). This chain is tRNA dimethylallyltransferase, found in Thermosipho africanus (strain TCF52B).